Reading from the N-terminus, the 705-residue chain is Elongation factor G (705 aa).

The tr-type G domain maps to H8–A290. Residues A17–T24, D88–H92, and N142–D145 contribute to the GTP site.

It belongs to the TRAFAC class translation factor GTPase superfamily. Classic translation factor GTPase family. EF-G/EF-2 subfamily.

Its subcellular location is the cytoplasm. Its function is as follows. Catalyzes the GTP-dependent ribosomal translocation step during translation elongation. During this step, the ribosome changes from the pre-translocational (PRE) to the post-translocational (POST) state as the newly formed A-site-bound peptidyl-tRNA and P-site-bound deacylated tRNA move to the P and E sites, respectively. Catalyzes the coordinated movement of the two tRNA molecules, the mRNA and conformational changes in the ribosome. The protein is Elongation factor G of Xylella fastidiosa (strain M23).